The following is a 108-amino-acid chain: Heme oxygenase (staphylobilin-producing) (108 aa).

In terms of domain architecture, ABM spans 2–93; that stretch reads FMAENRLQLQ…DDDGQQSPIL (92 aa). N6 provides a ligand contact to Fe cation. Residues 21–28 and H76 each bind heme; that span reads RFYNRQGI.

It belongs to the antibiotic biosynthesis monooxygenase family. Heme-degrading monooxygenase IsdG subfamily. As to quaternary structure, homodimer.

The protein resides in the cytoplasm. The catalysed reaction is heme b + 5 AH2 + 4 O2 + 2 H(+) = delta-staphylobilin + Fe(2+) + formaldehyde + 5 A + 4 H2O. It carries out the reaction heme b + 5 AH2 + 4 O2 + 2 H(+) = beta-staphylobilin + Fe(2+) + formaldehyde + 5 A + 4 H2O. Functionally, allows bacterial pathogens to use the host heme as an iron source. Catalyzes the oxidative degradation of the heme macrocyclic porphyrin ring to the oxo-bilirubin chromophore staphylobilin (a mixture of the linear tetrapyrroles 5-oxo-delta-bilirubin and 15-oxo-beta-bilirubin) in the presence of a suitable electron donor such as ascorbate or NADPH--cytochrome P450 reductase, with subsequent release of free iron. In Staphylococcus aureus (strain Mu3 / ATCC 700698), this protein is Heme oxygenase (staphylobilin-producing) (isdI).